Reading from the N-terminus, the 149-residue chain is Ribosomal RNA large subunit methyltransferase H (149 aa).

S-adenosyl-L-methionine-binding positions include leucine 71, glycine 98, and 117 to 122 (LSKLTL).

The protein belongs to the RNA methyltransferase RlmH family. As to quaternary structure, homodimer.

The protein resides in the cytoplasm. It carries out the reaction pseudouridine(1915) in 23S rRNA + S-adenosyl-L-methionine = N(3)-methylpseudouridine(1915) in 23S rRNA + S-adenosyl-L-homocysteine + H(+). Specifically methylates the pseudouridine at position 1915 (m3Psi1915) in 23S rRNA. The chain is Ribosomal RNA large subunit methyltransferase H from Campylobacter jejuni subsp. doylei (strain ATCC BAA-1458 / RM4099 / 269.97).